Reading from the N-terminus, the 212-residue chain is Phosphatidylserine decarboxylase proenzyme (212 aa).

Serine 182 functions as the Schiff-base intermediate with substrate; via pyruvic acid in the catalytic mechanism. At serine 182 the chain carries Pyruvic acid (Ser); by autocatalysis.

It belongs to the phosphatidylserine decarboxylase family. PSD-A subfamily. Heterodimer of a large membrane-associated beta subunit and a small pyruvoyl-containing alpha subunit. Pyruvate serves as cofactor. Post-translationally, is synthesized initially as an inactive proenzyme. Formation of the active enzyme involves a self-maturation process in which the active site pyruvoyl group is generated from an internal serine residue via an autocatalytic post-translational modification. Two non-identical subunits are generated from the proenzyme in this reaction, and the pyruvate is formed at the N-terminus of the alpha chain, which is derived from the carboxyl end of the proenzyme. The post-translation cleavage follows an unusual pathway, termed non-hydrolytic serinolysis, in which the side chain hydroxyl group of the serine supplies its oxygen atom to form the C-terminus of the beta chain, while the remainder of the serine residue undergoes an oxidative deamination to produce ammonia and the pyruvoyl prosthetic group on the alpha chain.

The protein localises to the cell membrane. It carries out the reaction a 1,2-diacyl-sn-glycero-3-phospho-L-serine + H(+) = a 1,2-diacyl-sn-glycero-3-phosphoethanolamine + CO2. It functions in the pathway phospholipid metabolism; phosphatidylethanolamine biosynthesis; phosphatidylethanolamine from CDP-diacylglycerol: step 2/2. Its function is as follows. Catalyzes the formation of phosphatidylethanolamine (PtdEtn) from phosphatidylserine (PtdSer). The polypeptide is Phosphatidylserine decarboxylase proenzyme (Paraburkholderia xenovorans (strain LB400)).